The sequence spans 132 residues: uncharacterized protein (132 aa).

The protein to M.jannaschii MJ0661.

This is an uncharacterized protein from Helicobacter pylori (strain J99 / ATCC 700824) (Campylobacter pylori J99).